Reading from the N-terminus, the 353-residue chain is Peroxisome assembly protein 12-A (353 aa).

Topologically, residues 1-19 are peroxisomal matrix; the sequence is MAERGAHITTTSASDDRPS. The helical transmembrane segment at 20–47 threads the bilayer; it reads IFEVVAQESLMAAARPALHHIVKVLAES. Over 48–51 the chain is Cytoplasmic; sequence NPSR. The helical transmembrane segment at 52-76 threads the bilayer; it reads YGTLWRWFDELYTLLDWLLQQHYLS. The Peroxisomal matrix segment spans residues 77–104; it reads WASASFSENFYGLKRITLGKEVGQRNLP. Residues 105–134 form a helical membrane-spanning segment; that stretch reads RKEYWKSLLLLVLIPYLRVKLEKIVNRLRE. At 135–139 the chain is on the cytoplasmic side; the sequence is EQDYS. Residues 140–178 traverse the membrane as a helical segment; the sequence is IQNPTSFHKRCYKAILASYPFVKLGWEAWFLFYQLRYIL. Topologically, residues 179–243 are peroxisomal matrix; it reads WNGKNHSPLL…LGAVALSVSS (65 aa). The helical transmembrane segment at 244–271 threads the bilayer; it reads SLSLGVFFLQFLDWWYSAENQETLKSLN. Residues 272 to 353 lie on the Cytoplasmic side of the membrane; it reads NLPVPPPPIH…HLIKLYTPDG (82 aa). Positions 298, 301, 319, and 322 each coordinate Zn(2+). The RING-type; degenerate zinc-finger motif lies at 298 to 337; it reads CPLCRKVRVNDTALGTSGYVFCYRCAYYYVKTHQRCPVSG.

This sequence belongs to the pex2/pex10/pex12 family. As to quaternary structure, component of the PEX2-PEX10-PEX12 retrotranslocation channel.

It is found in the peroxisome membrane. It participates in protein modification; protein ubiquitination. Its function is as follows. Component of a retrotranslocation channel required for peroxisome organization by mediating export of the PEX5 receptor from peroxisomes to the cytosol, thereby promoting PEX5 recycling. The retrotranslocation channel is composed of PEX2, PEX10 and PEX12; each subunit contributing transmembrane segments that coassemble into an open channel that specifically allows the passage of PEX5 through the peroxisomal membrane. PEX12 also regulates PEX5 recycling by activating the E3 ubiquitin-protein ligase activity of PEX10. When PEX5 recycling is compromised, PEX12 stimulates PEX10-mediated polyubiquitination of PEX5, leading to its subsequent degradation. This is Peroxisome assembly protein 12-A from Xenopus laevis (African clawed frog).